The chain runs to 2209 residues: Orsellinic acid synthase armB (2209 aa).

The segment at 38–261 (LLLDACYYAF…HKTTVDALYH (224 aa)) is N-terminal acylcarrier protein transacylase domain (SAT). In terms of domain architecture, Ketosynthase family 3 (KS3) spans 391 to 817 (QEPIAICGMS…GSNGALLLEE (427 aa)). Residues cysteine 561, histidine 696, and histidine 736 each act as for beta-ketoacyl synthase activity in the active site. The tract at residues 914 to 1239 (VFVFSGQGGQ…NLTLSSSLSQ (326 aa)) is malonyl-CoA:ACP transacylase (MAT) domain. Serine 1008 acts as the For acyl/malonyl transferase activity in catalysis. An N-terminal hotdog fold region spans residues 1306-1436 (MLQSWAQFPS…GQFRPLLVAD (131 aa)). One can recognise a PKS/mFAS DH domain in the interval 1306–1613 (MLQSWAQFPS…FKKLRLNTLQ (308 aa)). The interval 1335–1610 (ITGHIVGDVP…GMCFKKLRLN (276 aa)) is product template (PT) domain. Residue histidine 1338 is the Proton acceptor; for dehydratase activity of the active site. The segment at 1463–1613 (AEVITTRTAY…FKKLRLNTLQ (151 aa)) is C-terminal hotdog fold. Catalysis depends on aspartate 1524, which acts as the Proton donor; for dehydratase activity. Carrier domains are found at residues 1659–1734 (VDVQ…SSTI) and 1844–1921 (SSSS…SSKQ). Serine 1693 and serine 1881 each carry O-(pantetheine 4'-phosphoryl)serine. The disordered stretch occupies residues 1917 to 1945 (ISSKQPGKSPKPSEEATMDPDKEEDLSDL). The span at 1932–1943 (ATMDPDKEEDLS) shows a compositional bias: acidic residues. The segment at 1962-2201 (VPMSVQKSSS…LGAVTQALVD (240 aa)) is thioesterase (TE) domain.

The catalysed reaction is 3 malonyl-CoA + acetyl-CoA + 2 H(+) = orsellinate + 3 CO2 + 4 CoA. It functions in the pathway secondary metabolite biosynthesis. Functionally, non-reducing polyketide synthase, part of the gene cluster that mediates the biosynthesis of melleolides, a range of antifungal and phytotoxic polyketide derivatives composed of an orsellinic acid (OA) moiety esterified to various sesquiterpene alcohols. The first step in melleolides biosynthesis is performed by the delta(6)-protoilludene synthase PRO1 which catalyzes the cyclization of farnesyl diphosphate to protoilludene. The orsellinic acid synthase armB produces OA by condensing acetyl-CoA with 3 malonyl-CoA units in a three-round chain elongation reaction folowed by a C2-C7 ring closure. ArmB further catalyzes the trans-esterification of OA to the various sesquiterpene alcohols resulting from the hydroxylation of protoilludene. The melleolides cluster also includes 5 cytochrome P450 monooxygenases, 4 NAD(+)-dependent oxidoreductases, one flavin-dependent oxidoreductase, and one O-methyltransferase. The cytochrome P450 monooxygenases may be involved in protoilludene hydroxylation to elaborate melleolides with multiple alcohol groups, such as melleolide D, which carries alcohol functionalities at C-4, C-5, C-10, and C-13. The role of the NAD(+)-dependent enzymes remains unknown. Numerous melleolides, including arnamial, show 5'-O-methylation of the aromatic moiety which may be catalyzed by the methyltransferase encoded in the cluster. The flavin-dependent oxidoreductase might represent the dehydrogenase yielding the aldehyde in position 1 of arnamial and other melleolides. Finally, several halogenase localized outside of the cluster (armH1 to armH5), are able to catalyze the transfer of a single chlorine atom to the melleolide backbone, resulting in a 6'-chloromelleolide product. The protein is Orsellinic acid synthase armB of Armillaria mellea (Honey mushroom).